Consider the following 117-residue polypeptide: MDKKASRIRRATRARRKIAELCATRLVVHRTPRHTYAQVIAPNGSEVIAAASTVEKAIREQVGNTSNKAAAVAIGKLIAERAIEKGITNVAFDRSGFQYHGRVAALADSAREAGLKF.

Belongs to the universal ribosomal protein uL18 family. In terms of assembly, part of the 50S ribosomal subunit; part of the 5S rRNA/L5/L18/L25 subcomplex. Contacts the 5S and 23S rRNAs.

In terms of biological role, this is one of the proteins that bind and probably mediate the attachment of the 5S RNA into the large ribosomal subunit, where it forms part of the central protuberance. The polypeptide is Large ribosomal subunit protein uL18 (Aliivibrio salmonicida (strain LFI1238) (Vibrio salmonicida (strain LFI1238))).